The sequence spans 130 residues: Holo-[acyl-carrier-protein] synthase (130 aa).

Mg(2+) is bound by residues Asp9 and Glu58.

Belongs to the P-Pant transferase superfamily. AcpS family. Requires Mg(2+) as cofactor.

The protein localises to the cytoplasm. The catalysed reaction is apo-[ACP] + CoA = holo-[ACP] + adenosine 3',5'-bisphosphate + H(+). Transfers the 4'-phosphopantetheine moiety from coenzyme A to a Ser of acyl-carrier-protein. This chain is Holo-[acyl-carrier-protein] synthase, found in Mycolicibacterium paratuberculosis (strain ATCC BAA-968 / K-10) (Mycobacterium paratuberculosis).